The following is a 124-amino-acid chain: Cytochrome c2 (124 aa).

Pyrrolidone carboxylic acid is present on Gln1. The heme c site is built by Cys16, Cys19, His20, and Met85.

The protein belongs to the cytochrome c family. In terms of processing, binds 1 heme c group covalently per subunit.

The protein localises to the periplasm. In terms of biological role, cytochrome c2 is found mainly in purple, non-sulfur, photosynthetic bacteria where it functions as the electron donor to the oxidized bacteriochlorophyll in the photophosphorylation pathway. However, it may also have a role in the respiratory chain and is found in some non-photosynthetic bacteria. The polypeptide is Cytochrome c2 (Afifella marina (Rhodobium marinum)).